Here is a 627-residue protein sequence, read N- to C-terminus: Membrane protein insertase YidC (627 aa).

6 helical membrane-spanning segments follow: residues Lys3 to Asn23, Trp376 to Tyr396, Leu450 to Ile470, Phe502 to Ile522, Glu534 to Phe554, and Ala558 to Ser578.

It belongs to the OXA1/ALB3/YidC family. Type 1 subfamily. Interacts with the Sec translocase complex via SecD. Specifically interacts with transmembrane segments of nascent integral membrane proteins during membrane integration.

The protein localises to the cell inner membrane. Its function is as follows. Required for the insertion and/or proper folding and/or complex formation of integral membrane proteins into the membrane. Involved in integration of membrane proteins that insert both dependently and independently of the Sec translocase complex, as well as at least some lipoproteins. Aids folding of multispanning membrane proteins. This Porphyromonas gingivalis (strain ATCC BAA-308 / W83) protein is Membrane protein insertase YidC.